A 281-amino-acid polypeptide reads, in one-letter code: N-acetylmuramic acid 6-phosphate etherase (281 aa).

One can recognise an SIS domain in the interval 63–226 (IVPRMKQGGR…TTSVMIQLGR (164 aa)). The active-site Proton donor is Glu91. Residue Glu122 is part of the active site.

The protein belongs to the GCKR-like family. MurNAc-6-P etherase subfamily. In terms of assembly, homodimer.

It catalyses the reaction N-acetyl-D-muramate 6-phosphate + H2O = N-acetyl-D-glucosamine 6-phosphate + (R)-lactate. It functions in the pathway amino-sugar metabolism; N-acetylmuramate degradation. Specifically catalyzes the cleavage of the D-lactyl ether substituent of MurNAc 6-phosphate, producing GlcNAc 6-phosphate and D-lactate. In Bacteroides fragilis (strain ATCC 25285 / DSM 2151 / CCUG 4856 / JCM 11019 / LMG 10263 / NCTC 9343 / Onslow / VPI 2553 / EN-2), this protein is N-acetylmuramic acid 6-phosphate etherase.